Here is an 84-residue protein sequence, read N- to C-terminus: Small ribosomal subunit protein bS18A (84 aa).

This sequence belongs to the bacterial ribosomal protein bS18 family. In terms of assembly, part of the 30S ribosomal subunit. Forms a tight heterodimer with protein bS6.

Its function is as follows. Binds as a heterodimer with protein bS6 to the central domain of the 16S rRNA, where it helps stabilize the platform of the 30S subunit. The chain is Small ribosomal subunit protein bS18A from Frankia alni (strain DSM 45986 / CECT 9034 / ACN14a).